Consider the following 297-residue polypeptide: Phosphatidylglycerol--prolipoprotein diacylglyceryl transferase (297 aa).

The next 3 helical transmembrane spans lie at 17 to 37 (LAVR…IVVG), 59 to 79 (MLFY…VLFY), and 97 to 117 (GGMS…LFAW). An a 1,2-diacyl-sn-glycero-3-phospho-(1'-sn-glycerol)-binding site is contributed by arginine 142. Helical transmembrane passes span 230 to 250 (MGAV…TVEF) and 257 to 277 (FLGL…PMIV).

Belongs to the Lgt family.

It is found in the cell inner membrane. The enzyme catalyses L-cysteinyl-[prolipoprotein] + a 1,2-diacyl-sn-glycero-3-phospho-(1'-sn-glycerol) = an S-1,2-diacyl-sn-glyceryl-L-cysteinyl-[prolipoprotein] + sn-glycerol 1-phosphate + H(+). It functions in the pathway protein modification; lipoprotein biosynthesis (diacylglyceryl transfer). In terms of biological role, catalyzes the transfer of the diacylglyceryl group from phosphatidylglycerol to the sulfhydryl group of the N-terminal cysteine of a prolipoprotein, the first step in the formation of mature lipoproteins. This is Phosphatidylglycerol--prolipoprotein diacylglyceryl transferase from Burkholderia multivorans (strain ATCC 17616 / 249).